Reading from the N-terminus, the 462-residue chain is Myo-inositol transporter 3B (462 aa).

Transmembrane regions (helical) follow at residues Met1–Tyr21, Ile31–Thr51, Ile61–Gly81, Leu91–Pro111, Leu194–Ser214, Leu218–Val238, Gly245–Phe265, Val289–Val309, Gly324–Leu344, and Gly354–Phe374.

Belongs to the major facilitator superfamily. Sugar transporter (TC 2.A.1.1) family.

The protein resides in the cell membrane. The catalysed reaction is myo-inositol(out) + H(+)(out) = myo-inositol(in) + H(+)(in). Functionally, transporter for myo-inositol. This Cryptococcus neoformans var. grubii serotype A (strain H99 / ATCC 208821 / CBS 10515 / FGSC 9487) (Filobasidiella neoformans var. grubii) protein is Myo-inositol transporter 3B.